We begin with the raw amino-acid sequence, 514 residues long: Maturase K (514 aa).

The protein belongs to the intron maturase 2 family. MatK subfamily.

It is found in the plastid. Its subcellular location is the chloroplast. Usually encoded in the trnK tRNA gene intron. Probably assists in splicing its own and other chloroplast group II introns. This is Maturase K from Plantago argentea (Silver plantain).